Reading from the N-terminus, the 332-residue chain is Melanocortin receptor 4 (332 aa).

The Extracellular portion of the chain corresponds to 1 to 43 (MNSTLQHGMHTSLHFWNRSTYGQHSNATESLGKGYPDGGCYEQ). N-linked (GlcNAc...) asparagine glycans are attached at residues Asn2, Asn17, and Asn26. Intrachain disulfides connect Cys40/Cys279 and Cys271/Cys277. The chain crosses the membrane as a helical span at residues 44–69 (LFVSPEVFVTLGVISLLENILVIVAI). Over 70–81 (AKNKNLHSPMYF) the chain is Cytoplasmic. A helical membrane pass occupies residues 82–106 (FICSLAVADMLVSVSNGSETIVITL). Ca(2+) contacts are provided by Glu100, Asp122, and Asp126. Topologically, residues 107–123 (LNSTDTDAQSFTVNIDN) are extracellular. Residues 124–145 (VIDSVICSSLLASICSLLSIAV) traverse the membrane as a helical segment. Topologically, residues 146 to 165 (DRYFTIFYALQYHNIMTVRR) are cytoplasmic. The chain crosses the membrane as a helical span at residues 166–186 (VGIIISCIWAACTVSGILFII). At 187–191 (YSDST) the chain is on the extracellular side. The chain crosses the membrane as a helical span at residues 192–215 (AVIICLITMFFTMLALMASLYVHM). Topologically, residues 216-248 (FLMARLHIKRIAVLPGTGTIRQGANMKGAITLT) are cytoplasmic. The helical transmembrane segment at 249–271 (ILIGVFVVCWAPFFLHLIFYISC) threads the bilayer. The Extracellular segment spans residues 272–280 (PQNPYCVCF). The helical transmembrane segment at 281–304 (MSHFNLYLILIMCNSIIDPLIYAL) threads the bilayer. Topologically, residues 305 to 332 (RSQELRKTFKEIICCYPLGGLCDLSSRY) are cytoplasmic. Cys318 carries the S-palmitoyl cysteine lipid modification.

This sequence belongs to the G-protein coupled receptor 1 family. In terms of assembly, homodimer; disulfide-linked, also forms higher order oligomers. Interacts with GNAS. Interacts with ATRNL1. Interacts with MGRN1; this interaction competes with GNAS-binding and thus inhibits agonist-induced cAMP production. Interacts with MRAP and MRAP2; these associated factors increase ligand-sensitivity and generation of cAMP.

The protein resides in the cell membrane. Its function is as follows. Hormone receptor that acts as a key component of the leptin-melanocortin pathway at the intersection of homeostatic maintenance of energetic state. Plays a role in regulating food intake: activation by a stimulating hormone such as anorexigenic alpha-melanocyte stimulating hormone (alpha-MSH) inhibits appetite, whereas binding to a natural antagonist like Agouti-related protein/AGRP promotes appetite. G-protein-coupled receptor that activates conventional Galphas signaling leading to induction of anorexogenic signaling in the hypothalamus to result in negative energy balance. Regulates the firing activity of neurons from the hypothalamus by alpha-MSH and AGRP independently of Galphas signaling by ligand-induced coupling of closure of inwardly rectifying potassium channel KCNJ13. In intestinal epithelial cells, plays a role in the inhibition of hepatic glucose production via nesfatin-1/NUCB2 leading to increased cyclic adenosine monophosphate (cAMP) levels and glucagon-like peptide 1 (GLP-1) secretion in the intestinal epithelium. This Vulpes vulpes (Red fox) protein is Melanocortin receptor 4 (MC4R).